The primary structure comprises 98 residues: Gas vesicle protein A (98 aa).

The protein belongs to the gas vesicle GvpA family. In terms of assembly, the gas vesicle shell is 2 nm thick and consists of a single layer of this protein. It forms helical ribs nearly perpendicular to the long axis of the vesicle.

It is found in the gas vesicle shell. In terms of biological role, gas vesicles are hollow, gas filled proteinaceous nanostructures found in some microorganisms. During planktonic growth they allow positioning of the organism at a favorable depth for light or nutrient acquisition. GvpA forms the protein shell. In Koribacter versatilis (strain Ellin345), this protein is Gas vesicle protein A.